We begin with the raw amino-acid sequence, 440 residues long: Xylose isomerase (440 aa).

Active-site residues include histidine 101 and aspartate 104. The Mg(2+) site is built by glutamate 232, glutamate 268, histidine 271, aspartate 296, aspartate 307, aspartate 309, and aspartate 339.

It belongs to the xylose isomerase family. As to quaternary structure, homotetramer. Requires Mg(2+) as cofactor.

Its subcellular location is the cytoplasm. The enzyme catalyses alpha-D-xylose = alpha-D-xylulofuranose. This Escherichia coli (strain SMS-3-5 / SECEC) protein is Xylose isomerase.